The following is a 486-amino-acid chain: Ribulose bisphosphate carboxylase large chain (486 aa).

Substrate-binding residues include N125 and T175. K177 acts as the Proton acceptor in catalysis. K179 is a binding site for substrate. Mg(2+) contacts are provided by K203, D205, and E206. An N6-carboxylysine modification is found at K203. H295 acts as the Proton acceptor in catalysis. Substrate contacts are provided by R296, H328, and S380.

Belongs to the RuBisCO large chain family. Type I subfamily. In terms of assembly, heterohexadecamer of 8 large chains and 8 small chains. The cofactor is Mg(2+).

The catalysed reaction is 2 (2R)-3-phosphoglycerate + 2 H(+) = D-ribulose 1,5-bisphosphate + CO2 + H2O. The enzyme catalyses D-ribulose 1,5-bisphosphate + O2 = 2-phosphoglycolate + (2R)-3-phosphoglycerate + 2 H(+). Its function is as follows. RuBisCO catalyzes two reactions: the carboxylation of D-ribulose 1,5-bisphosphate, the primary event in carbon dioxide fixation, as well as the oxidative fragmentation of the pentose substrate. Both reactions occur simultaneously and in competition at the same active site. In Cereibacter sphaeroides (Rhodobacter sphaeroides), this protein is Ribulose bisphosphate carboxylase large chain.